A 341-amino-acid polypeptide reads, in one-letter code: Ribosomal RNA small subunit methyltransferase H (341 aa).

Residues 47 to 49, Asp-64, Phe-91, Asp-109, and Gln-116 each bind S-adenosyl-L-methionine; that span reads GGY. The interval 292–319 is disordered; the sequence is VAASEEEASRNPRARSAKLRAGVRTEAP.

This sequence belongs to the methyltransferase superfamily. RsmH family.

The protein resides in the cytoplasm. It carries out the reaction cytidine(1402) in 16S rRNA + S-adenosyl-L-methionine = N(4)-methylcytidine(1402) in 16S rRNA + S-adenosyl-L-homocysteine + H(+). Specifically methylates the N4 position of cytidine in position 1402 (C1402) of 16S rRNA. The polypeptide is Ribosomal RNA small subunit methyltransferase H (Rhizobium meliloti (strain 1021) (Ensifer meliloti)).